The chain runs to 598 residues: NADH-quinone oxidoreductase subunit C/D (598 aa).

The NADH dehydrogenase I subunit C stretch occupies residues 1-188; it reads MTDSTTHDAL…DPFVLTKQKE (188 aa). Residues 212–598 form an NADH dehydrogenase I subunit D region; sequence DFMFLNLGPN…IDFVMSDVDR (387 aa).

This sequence in the N-terminal section; belongs to the complex I 30 kDa subunit family. In the C-terminal section; belongs to the complex I 49 kDa subunit family. In terms of assembly, NDH-1 is composed of 13 different subunits. Subunits NuoB, CD, E, F, and G constitute the peripheral sector of the complex.

Its subcellular location is the cell inner membrane. The enzyme catalyses a quinone + NADH + 5 H(+)(in) = a quinol + NAD(+) + 4 H(+)(out). Its function is as follows. NDH-1 shuttles electrons from NADH, via FMN and iron-sulfur (Fe-S) centers, to quinones in the respiratory chain. The immediate electron acceptor for the enzyme in this species is believed to be ubiquinone. Couples the redox reaction to proton translocation (for every two electrons transferred, four hydrogen ions are translocated across the cytoplasmic membrane), and thus conserves the redox energy in a proton gradient. The protein is NADH-quinone oxidoreductase subunit C/D of Serratia proteamaculans (strain 568).